A 420-amino-acid polypeptide reads, in one-letter code: Carbohydrate sulfotransferase 12 (420 aa).

The Cytoplasmic portion of the chain corresponds to 1 to 5 (MAKSR). The chain crosses the membrane as a helical; Signal-anchor for type II membrane protein span at residues 6 to 26 (LFCLLVALGSVFMILFIIVYW). Topologically, residues 27 to 420 (DNVGTANLNL…YPKPDDLLSV (394 aa)) are lumenal. Residues N76 and N139 are each glycosylated (N-linked (GlcNAc...) asparagine). Residue 176 to 182 (PKVACTN) participates in 3'-phosphoadenylyl sulfate binding. An N-linked (GlcNAc...) asparagine glycan is attached at N215. 3'-phosphoadenylyl sulfate is bound at residue 251-259 (RDPFVRLIS). N-linked (GlcNAc...) asparagine glycans are attached at residues N286 and N376.

It belongs to the sulfotransferase 2 family.

It is found in the golgi apparatus membrane. It carries out the reaction chondroitin beta-D-glucuronate + n 3'-phosphoadenylyl sulfate = chondroitin 4'-sulfate + n adenosine 3',5'-bisphosphate + n H(+). Its function is as follows. Catalyzes the transfer of sulfate to position 4 of the N-acetylgalactosamine (GalNAc) residue of chondroitin and desulfated dermatan sulfate. Chondroitin sulfate constitutes the predominant proteoglycan present in cartilage and is distributed on the surfaces of many cells and extracellular matrices. The protein is Carbohydrate sulfotransferase 12 (chst12) of Xenopus laevis (African clawed frog).